Reading from the N-terminus, the 316-residue chain is Glucan endo-1,3-beta-glucosidase GV (316 aa).

The Proton donor role is filled by Glu99. Catalysis depends on Glu239, which acts as the Nucleophile.

Belongs to the glycosyl hydrolase 17 family.

Its subcellular location is the cytoplasm. The catalysed reaction is Hydrolysis of (1-&gt;3)-beta-D-glucosidic linkages in (1-&gt;3)-beta-D-glucans.. Functionally, may provide a degree of protection against microbial invasion of germinated barley grain through its ability to degrade fungal cell wall polysaccharides. The protein is Glucan endo-1,3-beta-glucosidase GV of Hordeum vulgare (Barley).